A 426-amino-acid chain; its full sequence is MLDPKLLRNQLNDVAENLKKRGYELDTQAFTALEERRRTLQTACESLQQERNTRSKNIGKAKAAGEDIGPLLQEVDNLKSALAEAEQNLQALQGELEALVSAIPNMVHDDVPAGKSEDDNVEISKWGEPKTFDFEVQDHVDVGAAIGGLDFETATKITGARFSLMRGDIASMHRALTQLMLNTHIDEHKYEEVYVPYIVNKDSLYGTGQLPKFEEDLFKLTDDREFYLIPTAEVPVTNIARGEIFDESQLPVRFVAHTPCFRSEAGSYGRDTRGMIRQHQFEKVELVQLVKPEDSLNALEELTQHAEAILQKLGLPYRKVVLCGGDIGFSATKTYDLEVWIPSQGKYREISSCSCFGDFQARRMMARYRNSETNKPELLHTINGSGLAVGRTLVAVLENYQREDGSVEIPAALQPYMNGKTVIAKA.

Thr-231 to Glu-233 is a binding site for L-serine. ATP is bound at residue Arg-262 to Glu-264. Residue Glu-285 coordinates L-serine. Glu-349–Ser-352 serves as a coordination point for ATP. L-serine is bound at residue Ser-385.

Belongs to the class-II aminoacyl-tRNA synthetase family. Type-1 seryl-tRNA synthetase subfamily. In terms of assembly, homodimer. The tRNA molecule binds across the dimer.

The protein localises to the cytoplasm. It catalyses the reaction tRNA(Ser) + L-serine + ATP = L-seryl-tRNA(Ser) + AMP + diphosphate + H(+). The enzyme catalyses tRNA(Sec) + L-serine + ATP = L-seryl-tRNA(Sec) + AMP + diphosphate + H(+). It participates in aminoacyl-tRNA biosynthesis; selenocysteinyl-tRNA(Sec) biosynthesis; L-seryl-tRNA(Sec) from L-serine and tRNA(Sec): step 1/1. Catalyzes the attachment of serine to tRNA(Ser). Is also able to aminoacylate tRNA(Sec) with serine, to form the misacylated tRNA L-seryl-tRNA(Sec), which will be further converted into selenocysteinyl-tRNA(Sec). The sequence is that of Serine--tRNA ligase from Saccharophagus degradans (strain 2-40 / ATCC 43961 / DSM 17024).